A 389-amino-acid chain; its full sequence is Serpin B13 (389 aa).

It belongs to the serpin family. Ov-serpin subfamily.

Its subcellular location is the cytoplasm. May play a role in the proliferation or differentiation of keratinocytes. This chain is Serpin B13 (Serpinb13), found in Mus musculus (Mouse).